A 612-amino-acid polypeptide reads, in one-letter code: Dihydroxy-acid dehydratase (612 aa).

Asp-81 serves as a coordination point for Mg(2+). Cys-122 provides a ligand contact to [2Fe-2S] cluster. Positions 123 and 124 each coordinate Mg(2+). Position 124 is an N6-carboxylysine (Lys-124). [2Fe-2S] cluster is bound at residue Cys-195. Mg(2+) is bound at residue Glu-491. The Proton acceptor role is filled by Ser-517.

This sequence belongs to the IlvD/Edd family. In terms of assembly, homodimer. It depends on [2Fe-2S] cluster as a cofactor. The cofactor is Mg(2+).

The enzyme catalyses (2R)-2,3-dihydroxy-3-methylbutanoate = 3-methyl-2-oxobutanoate + H2O. It catalyses the reaction (2R,3R)-2,3-dihydroxy-3-methylpentanoate = (S)-3-methyl-2-oxopentanoate + H2O. It participates in amino-acid biosynthesis; L-isoleucine biosynthesis; L-isoleucine from 2-oxobutanoate: step 3/4. The protein operates within amino-acid biosynthesis; L-valine biosynthesis; L-valine from pyruvate: step 3/4. Functions in the biosynthesis of branched-chain amino acids. Catalyzes the dehydration of (2R,3R)-2,3-dihydroxy-3-methylpentanoate (2,3-dihydroxy-3-methylvalerate) into 2-oxo-3-methylpentanoate (2-oxo-3-methylvalerate) and of (2R)-2,3-dihydroxy-3-methylbutanoate (2,3-dihydroxyisovalerate) into 2-oxo-3-methylbutanoate (2-oxoisovalerate), the penultimate precursor to L-isoleucine and L-valine, respectively. The protein is Dihydroxy-acid dehydratase of Rhizobium etli (strain CIAT 652).